A 228-amino-acid chain; its full sequence is U1 small nuclear ribonucleoprotein C (228 aa).

Residues 4–36 form a Matrin-type zinc finger; sequence YYCEYCDIYLTHSSPVGRRQHVQGRKHISAKIE. The span at 179-190 shows a compositional bias: basic and acidic residues; it reads LVKDNPNEERNG. Residues 179–228 are disordered; that stretch reads LVKDNPNEERNGDSAIANQPSTMHHEEDQDDPANATGGTANNNDNVSINA. Low complexity predominate over residues 211 to 221; the sequence is ANATGGTANNN.

It belongs to the U1 small nuclear ribonucleoprotein C family. In terms of assembly, U1 snRNP is composed of the 7 core Sm proteins B/B', D1, D2, D3, E, F and G that assemble in a heptameric protein ring on the Sm site of the small nuclear RNA to form the core snRNP, and at least 3 U1 snRNP-specific proteins U1-70K, U1-A and U1-C. U1-C interacts with U1 snRNA and the 5' splice-site region of the pre-mRNA.

The protein localises to the nucleus. In terms of biological role, component of the spliceosomal U1 snRNP, which is essential for recognition of the pre-mRNA 5' splice-site and the subsequent assembly of the spliceosome. U1-C is directly involved in initial 5' splice-site recognition for both constitutive and regulated alternative splicing. The interaction with the 5' splice-site seems to precede base-pairing between the pre-mRNA and the U1 snRNA. Stimulates commitment or early (E) complex formation by stabilizing the base pairing of the 5' end of the U1 snRNA and the 5' splice-site region. This chain is U1 small nuclear ribonucleoprotein C, found in Plasmodium knowlesi (strain H).